Here is a 183-residue protein sequence, read N- to C-terminus: MIKLFSLKQQKKEEESAGGTKGSSKKASAAQLRIQKDINELNLPKTCDISFSDPDDLLNFKLVICPDEGFYKSGKFVFSFKVGQGYPHDPPKVKCETMVYHPNIDLEGNVCLNILREDWKPVLTINSIIYGLQYLFLEPNPEDPLNKEAAEVLQNNRRLFEQNVQRSMRGGYIGSTYFERCLK.

Met1 is subject to N-acetylmethionine. Residues 1–29 (MIKLFSLKQQKKEEESAGGTKGSSKKASA) are disordered. The tract at residues 1–57 (MIKLFSLKQQKKEEESAGGTKGSSKKASAAQLRIQKDINELNLPKTCDISFSDPDDL) is interaction with UBA3. Lys3 is modified (N6-acetyllysine). In terms of domain architecture, UBC core spans 29–173 (AAQLRIQKDI…VQRSMRGGYI (145 aa)). A Phosphoserine modification is found at Ser50. Cys111 serves as the catalytic Glycyl thioester intermediate. Arg169 is modified (asymmetric dimethylarginine; alternate). An Omega-N-methylarginine; alternate modification is found at Arg169.

This sequence belongs to the ubiquitin-conjugating enzyme family. UBC12 subfamily. As to quaternary structure, interacts with UBA3 and RBX1. Interacts (N-terminally acetylated form) with (via DCUN1 domain) DCUN1D1, DCUN1D2, DCUN1D3, DCUN1D4 and DCUN1D5. The acetylation of Met-1 increases affinity for DCUN1D1 by about 2 orders of magnitude and is crucial for NEDD8 transfer to cullins.

It carries out the reaction [E1 NEDD8-activating enzyme]-S-[NEDD8 protein]-yl-L-cysteine + [E2 NEDD8-conjugating enzyme]-L-cysteine = [E1 NEDD8-activating enzyme]-L-cysteine + [E2 NEDD8-conjugating enzyme]-S-[NEDD8-protein]-yl-L-cysteine.. Its pathway is protein modification; protein neddylation. Accepts the ubiquitin-like protein NEDD8 from the UBA3-NAE1 E1 complex and catalyzes its covalent attachment to other proteins. The specific interaction with the E3 ubiquitin ligase RBX1, but not RBX2, suggests that the RBX1-UBE2M complex neddylates specific target proteins, such as CUL1, CUL2, CUL3 and CUL4. Involved in cell proliferation. The sequence is that of NEDD8-conjugating enzyme Ubc12 (Ube2m) from Mus musculus (Mouse).